Consider the following 150-residue polypeptide: SsrA-binding protein (150 aa).

The segment at 127 to 150 is disordered; that stretch reads KRETEKQRDWQREKARIMKGDAKD.

It belongs to the SmpB family.

The protein localises to the cytoplasm. In terms of biological role, required for rescue of stalled ribosomes mediated by trans-translation. Binds to transfer-messenger RNA (tmRNA), required for stable association of tmRNA with ribosomes. tmRNA and SmpB together mimic tRNA shape, replacing the anticodon stem-loop with SmpB. tmRNA is encoded by the ssrA gene; the 2 termini fold to resemble tRNA(Ala) and it encodes a 'tag peptide', a short internal open reading frame. During trans-translation Ala-aminoacylated tmRNA acts like a tRNA, entering the A-site of stalled ribosomes, displacing the stalled mRNA. The ribosome then switches to translate the ORF on the tmRNA; the nascent peptide is terminated with the 'tag peptide' encoded by the tmRNA and targeted for degradation. The ribosome is freed to recommence translation, which seems to be the essential function of trans-translation. In Cupriavidus necator (strain ATCC 17699 / DSM 428 / KCTC 22496 / NCIMB 10442 / H16 / Stanier 337) (Ralstonia eutropha), this protein is SsrA-binding protein.